The primary structure comprises 166 residues: Heme-degrading monooxygenase HmoB (166 aa).

N33 is a binding site for Fe cation. The 88-residue stretch at 66–153 (FAVLNNIAVT…SAGIDTTSIF (88 aa)) folds into the ABM domain. H138 provides a ligand contact to heme.

It belongs to the antibiotic biosynthesis monooxygenase family. Homodimer.

The protein resides in the cytoplasm. The catalysed reaction is heme b + 3 reduced [NADPH--hemoprotein reductase] + 3 O2 = biliverdin IXalpha + CO + Fe(2+) + 3 oxidized [NADPH--hemoprotein reductase] + 3 H2O + H(+). Functionally, catalyzes the oxidative degradation of the heme macrocyclic porphyrin ring in the presence of a suitable electron donor such as ascorbate or NADPH--cytochrome P450 reductase, with subsequent release of free iron. This is Heme-degrading monooxygenase HmoB (hmoB) from Bacillus subtilis (strain 168).